A 154-amino-acid chain; its full sequence is N-acetylneuraminate anomerase NanQ (154 aa).

Belongs to the NanQ anomerase family. The cofactor is Zn(2+).

It is found in the cytoplasm. It catalyses the reaction N-acetyl-alpha-neuraminate = aceneuramate. The enzyme catalyses N-acetyl-beta-neuraminate = aceneuramate. With respect to regulation, inhibited by 1,10-phenanthroline. Functionally, opens both the alpha- and beta-forms of N-acetylneuraminate (sialic acid; Neu5Ac) to provide aceneuramate, the preferred substrate for NanA. Has preferential activity on the beta-anomer rather than the alpha-anomer. Accelerates a reaction that is spontaneous at slightly alkaline pH, facilitates the reaction at acidic pH. The polypeptide is N-acetylneuraminate anomerase NanQ (Escherichia coli (strain K12)).